Here is a 303-residue protein sequence, read N- to C-terminus: Probable 5-dehydro-4-deoxyglucarate dehydratase (303 aa).

It belongs to the DapA family.

It carries out the reaction 5-dehydro-4-deoxy-D-glucarate + H(+) = 2,5-dioxopentanoate + CO2 + H2O. The protein operates within carbohydrate acid metabolism; D-glucarate degradation; 2,5-dioxopentanoate from D-glucarate: step 2/2. The sequence is that of Probable 5-dehydro-4-deoxyglucarate dehydratase from Pseudomonas syringae pv. tomato (strain ATCC BAA-871 / DC3000).